The chain runs to 209 residues: Mei4-dependent protein 1 (209 aa).

Positions Met1–Ser22 are cleaved as a signal peptide.

The protein localises to the secreted. The protein is Mei4-dependent protein 1 (mde1) of Schizosaccharomyces pombe (strain 972 / ATCC 24843) (Fission yeast).